Consider the following 239-residue polypeptide: Ribonuclease P protein component 3 (239 aa).

The protein belongs to the eukaryotic/archaeal RNase P protein component 3 family. In terms of assembly, consists of a catalytic RNA component and at least 4-5 protein subunits.

The protein resides in the cytoplasm. It carries out the reaction Endonucleolytic cleavage of RNA, removing 5'-extranucleotides from tRNA precursor.. In terms of biological role, part of ribonuclease P, a protein complex that generates mature tRNA molecules by cleaving their 5'-ends. The protein is Ribonuclease P protein component 3 of Methanosarcina acetivorans (strain ATCC 35395 / DSM 2834 / JCM 12185 / C2A).